A 543-amino-acid chain; its full sequence is Bifunctional riboflavin biosynthesis protein RIBA 1, chloroplastic (543 aa).

The transit peptide at 1 to 56 directs the protein to the chloroplast; that stretch reads MSSINLSSSSPSTISLSRSRLSQSSTTLLHGLHRVTLPSNHPLSTFSIKTNTGKVK. Positions 57–328 are DHBP synthase; sequence AAVISREDDL…IADLIRYRRK (272 aa). D-ribulose 5-phosphate-binding positions include 152 to 153, Asp-157, 267 to 271, and Glu-291; these read RE and RAGHT. Residue Glu-153 coordinates Mg(2+). His-270 provides a ligand contact to Mg(2+). Residues 329 to 543 are GTP cyclohydrolase II; sequence RDKLVERASA…VEKIESESES (215 aa). 379 to 383 serves as a coordination point for GTP; that stretch reads RVHSE. 3 residues coordinate Zn(2+): Cys-384, Cys-395, and Cys-397. GTP contacts are provided by residues Gln-400, 423 to 425, and Thr-445; that span reads EGR. Residue Asp-457 is the Proton acceptor; for GTP cyclohydrolase activity of the active site. Catalysis depends on Arg-459, which acts as the Nucleophile; for GTP cyclohydrolase activity. Thr-480 and Lys-485 together coordinate GTP.

It in the N-terminal section; belongs to the DHBP synthase family. In the C-terminal section; belongs to the GTP cyclohydrolase II family. Mg(2+) serves as cofactor. The cofactor is Mn(2+). Requires Zn(2+) as cofactor. In terms of tissue distribution, expressed in leaves, shoots, roots, flowers and siliques.

It is found in the plastid. The protein resides in the chloroplast. It catalyses the reaction D-ribulose 5-phosphate = (2S)-2-hydroxy-3-oxobutyl phosphate + formate + H(+). It carries out the reaction GTP + 4 H2O = 2,5-diamino-6-hydroxy-4-(5-phosphoribosylamino)-pyrimidine + formate + 2 phosphate + 3 H(+). Its pathway is cofactor biosynthesis; riboflavin biosynthesis; 2-hydroxy-3-oxobutyl phosphate from D-ribulose 5-phosphate: step 1/1. It functions in the pathway cofactor biosynthesis; riboflavin biosynthesis; 5-amino-6-(D-ribitylamino)uracil from GTP: step 1/4. Its function is as follows. Involved in riboflavin biosynthesis. Catalyzes both the conversion of D-ribulose 5-phosphate to formate and 3,4-dihydroxy-2-butanone 4-phosphate and the conversion of GTP to 2,5-diamino-6-ribosylamino-4(3H)-pyrimidinone 5'-phosphate (DARP), formate and pyrophosphate. RIBA2 and RIBA3 together are not able to complement the loss of function of RIBA1. This Arabidopsis thaliana (Mouse-ear cress) protein is Bifunctional riboflavin biosynthesis protein RIBA 1, chloroplastic (RIBA1).